Here is a 369-residue protein sequence, read N- to C-terminus: Histone deacetylase-like amidohydrolase (369 aa).

The active-site Proton donor/acceptor is His143. Zn(2+)-binding residues include Asp180, His182, and Asp268.

The protein belongs to the histone deacetylase family. In terms of assembly, homotetramer; dimer of dimers. It depends on Zn(2+) as a cofactor.

Zinc, and cobalt and nickel at a lesser extent, are able to increase the catalytic activity (2.2-, 1.3- and 1.1-fold respectively) at concentrations of 1 mM. Higher concentrations have an inhibitory effect. Magnesium, manganese and calcium have no effect on activity at concentrations between 0 and 10 mM. At 100 mM, the catalytic activity is increased between 1.2- and 2.1-fold. Hydroxamates like TSA and SAHA inhibit the enzyme. Is also inhibited by azobenzenes, stilbenes and arylazopyrazoles. Exhibits significant levels of protein deacetylase activity comparable to those of eukaryotic HDACs in assays both with fluorogenic peptidic substrates and acetate-radiolabeled histones. Accepts proteins with epsilon-acetylated lysine residues and tritiated-acetate-prelabeled chicken histones as substrates. The natural substrate protein is not yet known. This chain is Histone deacetylase-like amidohydrolase (hdaH), found in Alcaligenes sp. (strain DSM 11172) (Bordetella sp. (strain FB188)).